A 1402-amino-acid polypeptide reads, in one-letter code: DNA-directed RNA polymerase subunit beta' (1402 aa).

Residues Cys71, Cys73, Cys86, and Cys89 each coordinate Zn(2+). Mg(2+)-binding residues include Asp462, Asp464, and Asp466. Zn(2+) contacts are provided by Cys811, Cys885, Cys892, and Cys895.

It belongs to the RNA polymerase beta' chain family. In terms of assembly, the RNAP catalytic core consists of 2 alpha, 1 beta, 1 beta' and 1 omega subunit. When a sigma factor is associated with the core the holoenzyme is formed, which can initiate transcription. Mg(2+) serves as cofactor. It depends on Zn(2+) as a cofactor.

It carries out the reaction RNA(n) + a ribonucleoside 5'-triphosphate = RNA(n+1) + diphosphate. Its function is as follows. DNA-dependent RNA polymerase catalyzes the transcription of DNA into RNA using the four ribonucleoside triphosphates as substrates. This chain is DNA-directed RNA polymerase subunit beta', found in Rhizobium etli (strain ATCC 51251 / DSM 11541 / JCM 21823 / NBRC 15573 / CFN 42).